The primary structure comprises 354 residues: Probable L-ascorbate-6-phosphate lactonase UlaG (354 aa).

It belongs to the UlaG family. The cofactor is a divalent metal cation.

Its subcellular location is the cytoplasm. The catalysed reaction is L-ascorbate 6-phosphate + H2O = 3-dehydro-L-gulonate 6-phosphate. Its pathway is cofactor degradation; L-ascorbate degradation; D-xylulose 5-phosphate from L-ascorbate: step 1/4. In terms of biological role, probably catalyzes the hydrolysis of L-ascorbate-6-P into 3-keto-L-gulonate-6-P. Is essential for L-ascorbate utilization under anaerobic conditions. This chain is Probable L-ascorbate-6-phosphate lactonase UlaG, found in Shigella boydii serotype 4 (strain Sb227).